A 305-amino-acid polypeptide reads, in one-letter code: Acetaldehyde dehydrogenase (305 aa).

NAD(+) is bound at residue 13 to 16 (SGNI). Residue cysteine 128 is the Acyl-thioester intermediate of the active site. Residues 159-167 (SAGPGTRQN) and asparagine 278 each bind NAD(+).

The protein belongs to the acetaldehyde dehydrogenase family.

The catalysed reaction is acetaldehyde + NAD(+) + CoA = acetyl-CoA + NADH + H(+). The polypeptide is Acetaldehyde dehydrogenase (Chloroflexus aurantiacus (strain ATCC 29366 / DSM 635 / J-10-fl)).